Here is a 479-residue protein sequence, read N- to C-terminus: MSVPVQHPMYIDGQFVTWRGDAWIDVVNPATEAVISRIPDGQAEDARKAIDAAERAQPEWEALPAIERASWLRKISAGIRERASEISALIVEEGGKIQQLAEVEVAFTADYIDYMAEWARRYEGEIIQSDRPGENILLFKRALGVTTGILPWNFPFFLIARKMAPALLTGNTIVIKPSEFTPNNAIAFAKIVDEIGLPRGVFNLVLGRGETVGQELAGNPKVAMVSMTGSVSAGEKIMATAAKNITKVCLELGGKAPAIVMDDADLELAVKAIVDSRVINSGQVCNCAERVYVQKGIYDQFVNRLGEAMQAVQFGNPAERNDIAMGPLINAAALERVEQKVARAVEEGARVAFGGKAVEGKGYYYPPTLLLDVRQEMSIMHEETFGPVLPVVAFDTLEDAISMANDSDYGLTSSIYTQNLNVAMKAIKGLKFGETYINRENFEAMQGFHAGWRKSGIGGADGKHGLHEYLQTQVVYLQS.

Residue Leu150 coordinates NAD(+). Arg161 is a (S)-lactate binding site. NAD(+)-binding positions include 176–179 (KPSE), Gln214, and Ser230. Glu251 contacts (S)-lactate. Catalysis depends on residues Glu251 and Cys285. Position 286 (Asn286) interacts with (S)-lactate. Arg336 is a binding site for NAD(+). (S)-lactate-binding residues include Glu443 and His449.

It belongs to the aldehyde dehydrogenase family. As to quaternary structure, homotetramer.

The catalysed reaction is (S)-lactaldehyde + NAD(+) + H2O = (S)-lactate + NADH + 2 H(+). It carries out the reaction glycolaldehyde + NAD(+) + H2O = glycolate + NADH + 2 H(+). It functions in the pathway carbohydrate degradation; L-fucose degradation. Its pathway is carbohydrate degradation; L-rhamnose degradation. Substrate inhibition is very strong with lactaldehyde, diminishing progressively with glycolaldehyde, glyceraldehyde or methylglyoxal. Inhibited by p-hydroxy mercuribenzoate and by some cations, including Mn(2+), Ca(2+), Cu(2+) and Zn(2+). Inhibited by NADH. Its function is as follows. Catalyzes the irreversible oxidation of L-lactaldehyde to L-lactate. Also shows high activity with glycolaldehyde and L-glyceraldehyde. Has weaker activity with various aldehydes such as methylglyoxal, propionaldehyde or benzaldehyde. Involved in the degradation of lactaldehyde produced during metabolism of L-fucose and L-rhamnose. It may be involved in several other metabolic pathways. This chain is Lactaldehyde dehydrogenase (aldA), found in Escherichia coli (strain K12).